Here is a 72-residue protein sequence, read N- to C-terminus: MYLTLQEWNARQRRPRSLETVRRWVRECRIFPPPVKDGREYLFHESAVKVDLNRPVTGSLLKRIRNGKKAKS.

Functionally, excisionase and integrase are necessary for the excision of prophage from the host genome by site-specific recombination at the att site. This is Excisionase (xis) from Enterobacteria phage 434 (Bacteriophage 434).